The primary structure comprises 487 residues: NAD-dependent histone deacetylase HST3 (487 aa).

Positions 15–336 (PADTSIKLHE…FLTQEQLDSE (322 aa)) constitute a Deacetylase sirtuin-type domain. NAD(+) is bound by residues 40-59 (GAGI…DGLY) and 129-132 (QNID). The active-site Proton acceptor is histidine 167. Zn(2+) is bound by residues cysteine 175, cysteine 178, cysteine 200, and cysteine 203. NAD(+)-binding positions include 261–263 (GTS), 291–293 (NKT), and cysteine 312. The span at 397–406 (VESVSVKEEP) shows a compositional bias: basic and acidic residues. Residues 397–487 (VESVSVKEEP…ARKGITLDQH (91 aa)) are disordered. The span at 415–425 (HKPKQATKLKR) shows a compositional bias: basic residues. The span at 448 to 459 (DQLSSPASSING) shows a compositional bias: polar residues.

This sequence belongs to the sirtuin family. Class I subfamily. The cofactor is Zn(2+).

Its subcellular location is the cytoplasm. The protein localises to the nucleus. The catalysed reaction is N(6)-acetyl-L-lysyl-[protein] + NAD(+) + H2O = 2''-O-acetyl-ADP-D-ribose + nicotinamide + L-lysyl-[protein]. Its function is as follows. NAD-dependent histone deacetylase, which could function in telomeric silencing, cell cycle progression and chromosome stability. This Candida albicans (strain SC5314 / ATCC MYA-2876) (Yeast) protein is NAD-dependent histone deacetylase HST3 (HST3).